We begin with the raw amino-acid sequence, 361 residues long: MVHAEAFSRPLSRNEVVGLIFRLTIFGAVTYFTIKWMVDAIDPTRKQKVEAQKQAEKLMKQIGVKNVKLSEYEMSIAAHLVDPLNMHVTWSDIAGLDDVITDLKDTVILPIKKKHLFENSRLLQPPKGVLLYGPPGCGKTLIAKATAKEAGCRFINLQPSTLTDKWYGESQKLAAAVFSLAIKLQPSIIFIDEIDSFLRNRSSSDHEATAMMKAQFMSLWDGLDTDHSCQVIVMGATNRPQDLDSAIMRRMPTRFHINQPALKQREAILKLILKNENVDRHVDLLEVAQETDGFSGSDLKEMCRDAALLCVREYVNSTSEESHDEDEIRPVQQQDLHRAIEKMKKSKDAAFQNVLTHVCLD.

Residues 1–15 (MVHAEAFSRPLSRNE) lie on the Mitochondrial intermembrane side of the membrane. A helical transmembrane segment spans residues 16–32 (VVGLIFRLTIFGAVTYF). At 33-361 (TIKWMVDAID…QNVLTHVCLD (329 aa)) the chain is on the cytoplasmic side. Residue 133-140 (GPPGCGKT) coordinates ATP. Ser-322 carries the phosphoserine modification.

Belongs to the AAA ATPase family. MSP1 subfamily. Interacts with GRIA2 and GRIP1 in an ATP-dependent manner. ATAD1-catalyzed ATP hydrolysis disrupts not only its binding to GRIA2 and GRIP1, but also interaction between GRIP1 and GRIA2, leading to AMPAR complex disassembly.

The protein resides in the mitochondrion outer membrane. It is found in the peroxisome membrane. The protein localises to the postsynaptic cell membrane. The catalysed reaction is [protein]-with a C-terminal TM segment(out) + ATP + H2O = [protein]-with a C-terminal TM segment(in) + ADP + phosphate + H(+). Functionally, outer mitochondrial translocase required to remove mislocalized tail-anchored transmembrane proteins on mitochondria. Specifically recognizes and binds tail-anchored transmembrane proteins: acts as a dislocase that mediates the ATP-dependent extraction of mistargeted tail-anchored transmembrane proteins from the mitochondrion outer membrane. Also plays a critical role in regulating the surface expression of AMPA receptors (AMPAR), thereby regulating synaptic plasticity and learning and memory. Required for NMDA-stimulated AMPAR internalization and inhibition of GRIA1 and GRIA2 recycling back to the plasma membrane; these activities are ATPase-dependent. The sequence is that of Outer mitochondrial transmembrane helix translocase from Homo sapiens (Human).